The primary structure comprises 396 residues: Cell adhesion molecule 3 (396 aa).

The N-terminal stretch at 1–22 (MGAPSALPLLLLLACSWAPGGA) is a signal peptide. The region spanning 23–124 (NLSQDDSQPW…VRTAKSLVTV (102 aa)) is the Ig-like V-type domain. Residues 23-328 (NLSQDDSQPW…PVPSSSSTYH (306 aa)) lie on the Extracellular side of the membrane. Cystine bridges form between cysteine 48/cysteine 108, cysteine 150/cysteine 207, and cysteine 252/cysteine 297. 2 Ig-like C2-type domains span residues 128-226 (PQKP…QRIE) and 231-313 (PTAM…FTLN). Asparagine 288 carries an N-linked (GlcNAc...) asparagine glycan. The chain crosses the membrane as a helical span at residues 329–349 (AIIGGIVAFIVFLLLILLIFL). Residues 350 to 396 (GHYLIRHKGTYLTHEAKGSDDAPDADTAIINAEGGQSGGDDKKEYFI) lie on the Cytoplasmic side of the membrane. The segment at 365–396 (AKGSDDAPDADTAIINAEGGQSGGDDKKEYFI) is disordered. Serine 386 is modified (phosphoserine).

It belongs to the nectin family. Homodimer. Can form trans-heterodimers with NECTIN3. Interacts with EPB41L1, DLG3, PALS2 and CASK.

It is found in the cell membrane. Its subcellular location is the cell junction. In terms of biological role, involved in cell-cell adhesion. Has both calcium-independent homophilic cell-cell adhesion activity and calcium-independent heterophilic cell-cell adhesion activity with IGSF4, NECTIN1 and NECTIN3. Interaction with EPB41L1 may regulate structure or function of cell-cell junctions. This Rattus norvegicus (Rat) protein is Cell adhesion molecule 3 (Cadm3).